An 884-amino-acid polypeptide reads, in one-letter code: uncharacterized protein (884 aa).

This is an uncharacterized protein from Mycobacterium bovis (strain ATCC BAA-935 / AF2122/97).